A 183-amino-acid polypeptide reads, in one-letter code: Dual-action ribosomal maturation protein DarP (183 aa).

This sequence belongs to the DarP family.

It localises to the cytoplasm. Functionally, member of a network of 50S ribosomal subunit biogenesis factors which assembles along the 30S-50S interface, preventing incorrect 23S rRNA structures from forming. Promotes peptidyl transferase center (PTC) maturation. The sequence is that of Dual-action ribosomal maturation protein DarP from Escherichia coli O6:H1 (strain CFT073 / ATCC 700928 / UPEC).